A 330-amino-acid chain; its full sequence is RNA polymerase sigma factor RpoS (330 aa).

Residues 56-89 (DATQLYLGEIGYSPLLTAEEEVYFARRALRGDVA) are sigma-70 factor domain-1. The sigma-70 factor domain-2 stretch occupies residues 94 to 164 (MIESNLRLVV…ERAIMNQTRT (71 aa)). An Interaction with polymerase core subunit RpoC motif is present at residues 118–121 (DLIE). The sigma-70 factor domain-3 stretch occupies residues 174 to 249 (ELNVYLRTAR…DEKENGPEDT (76 aa)). The tract at residues 262–315 (WLFELNAKQREVLARRFGLLGYEAATLEDVGREIGLTRERVRQIQVEGLRRLRE) is sigma-70 factor domain-4. A DNA-binding region (H-T-H motif) is located at residues 288–307 (LEDVGREIGLTRERVRQIQV).

The protein belongs to the sigma-70 factor family. RpoS subfamily. In terms of assembly, interacts with the RNA polymerase core enzyme.

It localises to the cytoplasm. Functionally, sigma factors are initiation factors that promote the attachment of RNA polymerase to specific initiation sites and are then released. This sigma factor is the master transcriptional regulator of the stationary phase and the general stress response. This chain is RNA polymerase sigma factor RpoS, found in Salmonella dublin.